The primary structure comprises 862 residues: Probable glutaminase ARB_05535/05536 (862 aa).

The first 19 residues, 1 to 19, serve as a signal peptide directing secretion; sequence MLSWVLLAWAVACSALAGA. N-linked (GlcNAc...) asparagine glycans are attached at residues asparagine 106, asparagine 273, asparagine 436, asparagine 448, asparagine 486, asparagine 610, and asparagine 744. The disordered stretch occupies residues 798 to 862; it reads FLDDKDNNSP…SQMTIVNEND (65 aa). A compositionally biased stretch (polar residues) spans 853–862; the sequence is SQMTIVNEND.

Belongs to the fungal glutaminase gtaA family.

Its subcellular location is the secreted. The enzyme catalyses L-glutamine + H2O = L-glutamate + NH4(+). In terms of biological role, glutaminase catalyzes the hydrolysis of glutamine to glutamic acid and plays a key role in nitrogen metabolism. The polypeptide is Probable glutaminase ARB_05535/05536 (Arthroderma benhamiae (strain ATCC MYA-4681 / CBS 112371) (Trichophyton mentagrophytes)).